A 100-amino-acid chain; its full sequence is uncharacterized protein (100 aa).

2 helical membrane passes run 50-70 (LLIF…FSLF) and 75-95 (DVFL…SPEV).

The protein localises to the membrane. This is an uncharacterized protein from Saccharomyces cerevisiae (strain ATCC 204508 / S288c) (Baker's yeast).